Here is a 416-residue protein sequence, read N- to C-terminus: Tyrosine--tRNA ligase (416 aa).

Residue Tyr-40 coordinates L-tyrosine. A 'HIGH' region motif is present at residues 45-54; it reads ATAASLHVGH. Residues Tyr-177 and Gln-181 each coordinate L-tyrosine. A 'KMSKS' region motif is present at residues 237–241; it reads KMGKS. Lys-240 provides a ligand contact to ATP. The S4 RNA-binding domain maps to 351–416; it reads LSVAHFLVAA…RKKHKLVRLS (66 aa).

The protein belongs to the class-I aminoacyl-tRNA synthetase family. TyrS type 1 subfamily. As to quaternary structure, homodimer.

The protein resides in the cytoplasm. The enzyme catalyses tRNA(Tyr) + L-tyrosine + ATP = L-tyrosyl-tRNA(Tyr) + AMP + diphosphate + H(+). Its function is as follows. Catalyzes the attachment of tyrosine to tRNA(Tyr) in a two-step reaction: tyrosine is first activated by ATP to form Tyr-AMP and then transferred to the acceptor end of tRNA(Tyr). The sequence is that of Tyrosine--tRNA ligase from Cereibacter sphaeroides (strain ATCC 17029 / ATH 2.4.9) (Rhodobacter sphaeroides).